Reading from the N-terminus, the 667-residue chain is mRNA cap guanine-N(7) methyltransferase (667 aa).

Positions 1–19 (MYDPARDSWEERDGDEARS) are enriched in basic and acidic residues. The interval 1-272 (MYDPARDSWE…RRRQEERERA (272 aa)) is disordered. A compositionally biased stretch (polar residues) spans 33-52 (FSSSEQIYGASGENNNTTDL). Residues 72–87 (SPPAQSTTQTPPSIST) are compositionally biased toward low complexity. Residues 88–128 (HVQSPVNPAAQEASNTQSLTSAAQNQSNKSTTTMDNTSGSA) show a composition bias toward polar residues. The segment covering 132 to 142 (PRADPSDKSNR) has biased composition (basic and acidic residues). Over residues 147–156 (ASPTDQNGSQ) the composition is skewed to polar residues. Residues 256 to 272 (LVDRETLRRRQEERERA) show a composition bias toward basic and acidic residues. The region spanning 309-667 (SKIKGLRSFN…FYHAFCFYKV (359 aa)) is the mRNA cap 0 methyltransferase domain. 318–319 (NN) provides a ligand contact to mRNA. Residues lysine 322, glycine 365, aspartate 389, aspartate 427, 470–472 (MFT), and tyrosine 475 contribute to the S-adenosyl-L-methionine site. Over residues 521-535 (KKERQSQAKKEKTDE) the composition is skewed to basic and acidic residues. The disordered stretch occupies residues 521–547 (KKERQSQAKKEKTDEAPEDGEVEEDDG). Residues 536-547 (APEDGEVEEDDG) are compositionally biased toward acidic residues.

It belongs to the class I-like SAM-binding methyltransferase superfamily. mRNA cap 0 methyltransferase family.

The protein localises to the nucleus. It catalyses the reaction a 5'-end (5'-triphosphoguanosine)-ribonucleoside in mRNA + S-adenosyl-L-methionine = a 5'-end (N(7)-methyl 5'-triphosphoguanosine)-ribonucleoside in mRNA + S-adenosyl-L-homocysteine. Its function is as follows. Responsible for methylating the 5'-cap structure of mRNAs. The chain is mRNA cap guanine-N(7) methyltransferase (abd1) from Neosartorya fischeri (strain ATCC 1020 / DSM 3700 / CBS 544.65 / FGSC A1164 / JCM 1740 / NRRL 181 / WB 181) (Aspergillus fischerianus).